The sequence spans 1146 residues: Activator of SKN7 protein 10 (1146 aa).

Residues 1–15 (MSDYFSSRPSQTLTP) show a composition bias toward polar residues. Disordered stretches follow at residues 1–32 (MSDYFSSRPSQTLTPMGNKPSGGGGGDDASSI) and 171–194 (ITDPFTTAPRGPKKAQPAQKKVGL). Ser-344 carries the post-translational modification Phosphoserine. A PH domain is found at 482–606 (CIKAGYFLKK…DCTLKDASST (125 aa)). The tract at residues 553–575 (NNHHRQASDVHNSSTTTGGTAGA) is disordered. Low complexity predominate over residues 564-575 (NSSTTTGGTAGA). Phosphoserine is present on Ser-793. Position 808 is a phosphothreonine (Thr-808). 2 disordered regions span residues 835-854 (MATSGNTTPSYSSGSRPQSM) and 909-982 (PVNS…TAMR). Over residues 912-924 (SPGSSNSESSSGG) the composition is skewed to low complexity. Over residues 939–950 (YTQRNSEGSSPC) the composition is skewed to polar residues. Residue Ser-944 is modified to Phosphoserine. A compositionally biased stretch (low complexity) spans 958-968 (QQQQPLQMQPL). Position 969 is a phosphoserine (Ser-969). Residues 969-982 (SRTSSSSVNVTAMR) show a composition bias toward polar residues. Phosphothreonine is present on Thr-1017. A phosphoserine mark is found at Ser-1070, Ser-1095, and Ser-1098. The segment at 1124-1146 (GIQEDDGDSTNNDTIKLNQSIYS) is disordered. A compositionally biased stretch (polar residues) spans 1132 to 1146 (STNNDTIKLNQSIYS).

The protein belongs to the RGC1 family. As to quaternary structure, component of the RNA polymerase II holoenzyme. Interacts with RPO21 and SSN8. In terms of processing, phosphorylated in response to various stresses. stress-induced phosphorylation is partially dependent on HOG1.

It localises to the cytoplasm. Its function is as follows. Positive regulator of FPS1 glycerol channel required for the glycerol efflux. As a component of the RNA polymerase II holoenzyme, is required for SSN8 destruction in response to oxidative stress but not heat shock. Required for cell survival in response to heat shock independent of SSN8. The sequence is that of Activator of SKN7 protein 10 (ASK10) from Saccharomyces cerevisiae (strain ATCC 204508 / S288c) (Baker's yeast).